Reading from the N-terminus, the 344-residue chain is L-rhamnose-proton symporter (344 aa).

10 helical membrane-spanning segments follow: residues 4–24, 38–58, 68–88, 101–121, 137–157, 175–195, 214–234, 259–279, 290–310, and 323–343; these read AITMGIFWHLIGAASAACFYA, WSVGGIVSWIILPWAISALLL, FSLSTLLPVFLFGAMWGIGNI, MGIGIAIGITLIVGTLMTPII, TLLGVLVALIGVGIVTRAGQL, LVLAVMCGIFSAGMSFAMNAA, LPSYVVIMGGGAIINLGFCFI, VLLSALGGLMWYLQFFFYAWG, ISWMLHMSFYVLCGGIVGLVL, and VLSLGCVVIIVAANIVGMGMA.

Belongs to the L-rhamnose transporter (TC 2.A.7.6) family.

It is found in the cell inner membrane. The catalysed reaction is L-rhamnopyranose(in) + H(+)(in) = L-rhamnopyranose(out) + H(+)(out). Its function is as follows. Uptake of L-rhamnose across the cytoplasmic membrane with the concomitant transport of protons into the cell (symport system). In Escherichia coli O157:H7, this protein is L-rhamnose-proton symporter.